A 234-amino-acid polypeptide reads, in one-letter code: Peptidase E (234 aa).

Residues Ser123, Asp138, and His160 each act as charge relay system in the active site.

It belongs to the peptidase S51 family.

Its subcellular location is the cytoplasm. It catalyses the reaction Dipeptidase E catalyzes the hydrolysis of dipeptides Asp-|-Xaa. It does not act on peptides with N-terminal Glu, Asn or Gln, nor does it cleave isoaspartyl peptides.. In terms of biological role, hydrolyzes dipeptides containing N-terminal aspartate residues. May play a role in allowing the cell to use peptide aspartate to spare carbon otherwise required for the synthesis of the aspartate family of amino acids. This is Peptidase E from Actinobacillus pleuropneumoniae serotype 7 (strain AP76).